The chain runs to 504 residues: 26S proteasome non-ATPase regulatory subunit 3 (504 aa).

Residues 254-434 (ARYFYYQGRI…GYLQSRENID (181 aa)) form the PCI domain. Positions 485–504 (KEEMERQAEESSDNEGDSDF) are disordered. A compositionally biased stretch (acidic residues) spans 494–504 (ESSDNEGDSDF).

It belongs to the proteasome subunit S3 family. The 26S proteasome is composed of a core protease, known as the 20S proteasome, capped at one or both ends by the 19S regulatory complex (RC). The RC is composed of at least 18 different subunits in two subcomplexes, the base and the lid, which form the portions proximal and distal to the 20S proteolytic core, respectively.

Acts as a regulatory subunit of the 26 proteasome which is involved in the ATP-dependent degradation of ubiquitinated proteins. This chain is 26S proteasome non-ATPase regulatory subunit 3 (psmD3), found in Dictyostelium discoideum (Social amoeba).